The primary structure comprises 47 residues: Small, acid-soluble spore protein N (47 aa).

A compositionally biased stretch (basic residues) spans 1-12 (MSNPKGSRKHFV). The tract at residues 1–47 (MSNPKGSRKHFVPNHIGTQPRAAGGNKGKQMQDQSGQHAQVIQTKGE) is disordered. A compositionally biased stretch (polar residues) spans 29 to 47 (KQMQDQSGQHAQVIQTKGE).

The protein belongs to the SspN family.

The protein localises to the spore core. The sequence is that of Small, acid-soluble spore protein N from Geobacillus kaustophilus (strain HTA426).